Reading from the N-terminus, the 257-residue chain is tRNA pseudouridine synthase A (257 aa).

Asp-53 serves as the catalytic Nucleophile. Tyr-111 provides a ligand contact to substrate.

Belongs to the tRNA pseudouridine synthase TruA family. Homodimer.

The catalysed reaction is uridine(38/39/40) in tRNA = pseudouridine(38/39/40) in tRNA. Functionally, formation of pseudouridine at positions 38, 39 and 40 in the anticodon stem and loop of transfer RNAs. The chain is tRNA pseudouridine synthase A from Xanthomonas euvesicatoria pv. vesicatoria (strain 85-10) (Xanthomonas campestris pv. vesicatoria).